Reading from the N-terminus, the 310-residue chain is B3 domain-containing protein At4g02870 (310 aa).

Over residues 1–21 (MTLSDDPISPSTQESSNSSYV) the composition is skewed to polar residues. A disordered region spans residues 1-39 (MTLSDDPISPSTQESSNSSYVRSKEAEKNSPSQETDEEV). Residues 205 to 300 (RCGRLILQSS…RLQFGVISRN (96 aa)) constitute a DNA-binding region (TF-B3).

The protein localises to the nucleus. This Arabidopsis thaliana (Mouse-ear cress) protein is B3 domain-containing protein At4g02870 (ARF42).